Here is a 416-residue protein sequence, read N- to C-terminus: Serine hydroxymethyltransferase (416 aa).

(6S)-5,6,7,8-tetrahydrofolate contacts are provided by residues leucine 118 and 122–124 (GHL). Lysine 226 carries the post-translational modification N6-(pyridoxal phosphate)lysine. Residues glutamate 242 and 350 to 352 (SPF) contribute to the (6S)-5,6,7,8-tetrahydrofolate site.

Belongs to the SHMT family. As to quaternary structure, homodimer. The cofactor is pyridoxal 5'-phosphate.

Its subcellular location is the cytoplasm. It catalyses the reaction (6R)-5,10-methylene-5,6,7,8-tetrahydrofolate + glycine + H2O = (6S)-5,6,7,8-tetrahydrofolate + L-serine. It functions in the pathway one-carbon metabolism; tetrahydrofolate interconversion. Its pathway is amino-acid biosynthesis; glycine biosynthesis; glycine from L-serine: step 1/1. Catalyzes the reversible interconversion of serine and glycine with tetrahydrofolate (THF) serving as the one-carbon carrier. This reaction serves as the major source of one-carbon groups required for the biosynthesis of purines, thymidylate, methionine, and other important biomolecules. Also exhibits THF-independent aldolase activity toward beta-hydroxyamino acids, producing glycine and aldehydes, via a retro-aldol mechanism. In Helicobacter pylori (strain ATCC 700392 / 26695) (Campylobacter pylori), this protein is Serine hydroxymethyltransferase.